A 322-amino-acid polypeptide reads, in one-letter code: Tetraacyldisaccharide 4'-kinase (322 aa).

ATP is bound at residue 54-61; the sequence is SVGGTGKT.

This sequence belongs to the LpxK family.

It catalyses the reaction a lipid A disaccharide + ATP = a lipid IVA + ADP + H(+). It participates in glycolipid biosynthesis; lipid IV(A) biosynthesis; lipid IV(A) from (3R)-3-hydroxytetradecanoyl-[acyl-carrier-protein] and UDP-N-acetyl-alpha-D-glucosamine: step 6/6. Its function is as follows. Transfers the gamma-phosphate of ATP to the 4'-position of a tetraacyldisaccharide 1-phosphate intermediate (termed DS-1-P) to form tetraacyldisaccharide 1,4'-bis-phosphate (lipid IVA). The polypeptide is Tetraacyldisaccharide 4'-kinase (Francisella tularensis subsp. tularensis (strain FSC 198)).